The sequence spans 493 residues: 6-aminohexanoate-cyclic-dimer hydrolase (493 aa).

Active-site charge relay system residues include K72 and S150. S174 acts as the Acyl-ester intermediate in catalysis.

Belongs to the amidase family. In terms of assembly, homodimer.

The catalysed reaction is 1,8-diazacyclotetradecane-2,9-dione + H2O = N-(6-aminohexanoyl)-6-aminohexanoate. Its pathway is xenobiotic degradation; nylon-6 oligomer degradation. Strongly inhibited by 1 uM diisopropylphosphofluoridate and 10 uM p-chloromercuribenzoate but scarcely inhibited by 100 mM EDTA in vitro. Functionally, specifically catalyzes the hydrolysis of 6-aminohexanoic acid cyclic dimer (1,8-diazacyclotetradecane-2,9-dione) to form the linear dimer 6-aminohexanoyl-6-aminohexanoic acid. Is inactive on 6-aminohexanoic acid oligomers (degree of polymerization 2 to 6), various other cyclic amides, cyclic diamides, linear amides, oligopeptides, and casein. Allows the bacterium to grow on a medium containing 6-aminohexanoic acid cyclic dimer as the sole carbon and nitrogen sources. The protein is 6-aminohexanoate-cyclic-dimer hydrolase (nylA) of Paenarthrobacter ureafaciens.